Reading from the N-terminus, the 274-residue chain is uncharacterized protein (274 aa).

Residues 238–258 (ILSVQVIFATVIALIAISVFC) form a helical membrane-spanning segment.

Its subcellular location is the membrane. This is an uncharacterized protein from Schizosaccharomyces pombe (strain 972 / ATCC 24843) (Fission yeast).